The primary structure comprises 152 residues: SsrA-binding protein (152 aa).

The segment at 130–152 is disordered; it reads HDKRQDLKQRQDKREMERAMKQR. Residues 132–152 show a composition bias toward basic and acidic residues; sequence KRQDLKQRQDKREMERAMKQR.

It belongs to the SmpB family.

Its subcellular location is the cytoplasm. In terms of biological role, required for rescue of stalled ribosomes mediated by trans-translation. Binds to transfer-messenger RNA (tmRNA), required for stable association of tmRNA with ribosomes. tmRNA and SmpB together mimic tRNA shape, replacing the anticodon stem-loop with SmpB. tmRNA is encoded by the ssrA gene; the 2 termini fold to resemble tRNA(Ala) and it encodes a 'tag peptide', a short internal open reading frame. During trans-translation Ala-aminoacylated tmRNA acts like a tRNA, entering the A-site of stalled ribosomes, displacing the stalled mRNA. The ribosome then switches to translate the ORF on the tmRNA; the nascent peptide is terminated with the 'tag peptide' encoded by the tmRNA and targeted for degradation. The ribosome is freed to recommence translation, which seems to be the essential function of trans-translation. The chain is SsrA-binding protein from Thermosynechococcus vestitus (strain NIES-2133 / IAM M-273 / BP-1).